A 462-amino-acid polypeptide reads, in one-letter code: Light-independent protochlorophyllide reductase subunit N (462 aa).

Cys24, Cys49, and Cys109 together coordinate [4Fe-4S] cluster.

This sequence belongs to the BchN/ChlN family. Protochlorophyllide reductase is composed of three subunits; ChlL, ChlN and ChlB. Forms a heterotetramer of two ChlB and two ChlN subunits. [4Fe-4S] cluster serves as cofactor.

The protein resides in the plastid. It is found in the chloroplast. The catalysed reaction is chlorophyllide a + oxidized 2[4Fe-4S]-[ferredoxin] + 2 ADP + 2 phosphate = protochlorophyllide a + reduced 2[4Fe-4S]-[ferredoxin] + 2 ATP + 2 H2O. Its pathway is porphyrin-containing compound metabolism; chlorophyll biosynthesis (light-independent). Component of the dark-operative protochlorophyllide reductase (DPOR) that uses Mg-ATP and reduced ferredoxin to reduce ring D of protochlorophyllide (Pchlide) to form chlorophyllide a (Chlide). This reaction is light-independent. The NB-protein (ChlN-ChlB) is the catalytic component of the complex. The sequence is that of Light-independent protochlorophyllide reductase subunit N from Pleurastrum terricola (Filamentous green alga).